Here is a 132-residue protein sequence, read N- to C-terminus: uncharacterized protein (132 aa).

An N-terminal signal peptide occupies residues 1 to 24; sequence MVTIGSSSLVLFLFFVVFVQITYT. The next 2 helical transmembrane spans lie at 75–95 and 112–132; these read YVNV…ILGI and ESAI…VYIH.

Its subcellular location is the membrane. This is an uncharacterized protein from Saccharomyces cerevisiae (strain ATCC 204508 / S288c) (Baker's yeast).